We begin with the raw amino-acid sequence, 558 residues long: Putative polypeptide N-acetylgalactosaminyltransferase 13 (558 aa).

Topologically, residues M1–H12 are cytoplasmic. Residues C13 to I32 traverse the membrane as a helical; Signal-anchor for type II membrane protein segment. The Lumenal portion of the chain corresponds to R33–T558. Residues N48 and N111 are each glycosylated (N-linked (GlcNAc...) asparagine). Disulfide bonds link C97/C335, C326/C412, C445/C460, and C484/C498. The interval E109–R225 is catalytic subdomain A. D150 and R186 together coordinate substrate. Position 209 (D209) interacts with Mn(2+). S210 serves as a coordination point for substrate. H211 is a binding site for Mn(2+). Residues P281–R343 form a catalytic subdomain B region. W312 serves as a coordination point for substrate. Residue H340 participates in Mn(2+) binding. Residues R343 and H346 each contribute to the substrate site. In terms of domain architecture, Ricin B-type lectin spans V422–G556. Residue N501 is glycosylated (N-linked (GlcNAc...) asparagine). C525 and C539 form a disulfide bridge.

It belongs to the glycosyltransferase 2 family. GalNAc-T subfamily. Mn(2+) is required as a cofactor. During embryonic stages 16-17, very weak expression in the midgut.

The protein resides in the golgi apparatus membrane. It carries out the reaction L-seryl-[protein] + UDP-N-acetyl-alpha-D-galactosamine = a 3-O-[N-acetyl-alpha-D-galactosaminyl]-L-seryl-[protein] + UDP + H(+). The enzyme catalyses L-threonyl-[protein] + UDP-N-acetyl-alpha-D-galactosamine = a 3-O-[N-acetyl-alpha-D-galactosaminyl]-L-threonyl-[protein] + UDP + H(+). It participates in protein modification; protein glycosylation. In terms of biological role, may catalyze the initial reaction in O-linked oligosaccharide biosynthesis, the transfer of an N-acetyl-D-galactosamine residue to a serine or threonine residue on the protein receptor. The sequence is that of Putative polypeptide N-acetylgalactosaminyltransferase 13 (pgant13) from Drosophila melanogaster (Fruit fly).